The chain runs to 367 residues: Undecaprenyl-phosphate alpha-N-acetylglucosaminyl 1-phosphate transferase (367 aa).

Helical transmembrane passes span 3 to 23 (LLTA…FIFL), 45 to 65 (GVIP…MFGL), 69 to 89 (YIPH…VGAM), 129 to 149 (WELV…WAAI), 158 to 178 (IDGL…LILW), 187 to 207 (MWCF…LGIL), 213 to 233 (VFMG…LLLE), 242 to 262 (ISPV…VAIM), and 318 to 338 (VPEW…GYCI).

The protein belongs to the glycosyltransferase 4 family. WecA subfamily. It depends on Mg(2+) as a cofactor. Mn(2+) serves as cofactor.

It localises to the cell inner membrane. The catalysed reaction is di-trans,octa-cis-undecaprenyl phosphate + UDP-N-acetyl-alpha-D-glucosamine = N-acetyl-alpha-D-glucosaminyl-di-trans,octa-cis-undecaprenyl diphosphate + UMP. Its pathway is bacterial outer membrane biogenesis; LPS O-antigen biosynthesis. It participates in bacterial outer membrane biogenesis; enterobacterial common antigen biosynthesis. Inhibited by tunicamycin. Its function is as follows. Catalyzes the transfer of the GlcNAc-1-phosphate moiety from UDP-GlcNAc onto the carrier lipid undecaprenyl phosphate (C55-P), yielding GlcNAc-pyrophosphoryl-undecaprenyl (GlcNAc-PP-C55). In Salmonella typhimurium (strain LT2 / SGSC1412 / ATCC 700720), this protein is Undecaprenyl-phosphate alpha-N-acetylglucosaminyl 1-phosphate transferase.